A 746-amino-acid polypeptide reads, in one-letter code: Dystrobrevin alpha (746 aa).

Residues 1–288 are interaction with MAGEE1; it reads MIEDSGKRGN…SHSNQHQMKE (288 aa). A ZZ-type zinc finger spans residues 238–294; that stretch reads FHPVECSYCHSESMMGFRYRCQQCHNYQLCQDCFWRGHAGGSHSNQHQMKEYTSWKS. Residues C243, C246, C258, C261, C267, C270, H280, and H284 each coordinate Zn(2+). The syntrophin-binding region stretch occupies residues 397–447; it reads DRLADEHVLIGLYVNMLRNDPPCMLESSNRLDEEHRLIARYAARLAAESSS. A coiled-coil region spans residues 458–557; sequence DISFTIDANK…KLLKEEELKQ (100 aa). Disordered regions lie at residues 555–577, 646–667, and 684–721; these read LKQG…SRPI, ETES…APSP, and YIHG…VRQL. Over residues 563–576 the composition is skewed to low complexity; sequence SSPRSSPSHTISRP. S666 carries the post-translational modification Phosphoserine.

This sequence belongs to the dystrophin family. Dystrobrevin subfamily. In terms of assembly, interacts with dystrophin, utrophin and the syntrophins SNTA1, SNTB1, SNTB2, SNTG1 and SNTG2. Binds dystrobrevin binding protein 1. Interacts with MAGEE1. Interacts with Ctnnal1. The interaction is required for correct localization of both Ctnnal1 and Dtna. Does not interact with utrophin. As to quaternary structure, does not interact with syntrophin. In terms of processing, phosphorylation of isoform 2 on tyrosine kinase substrate domain present in the C-terminus. Expressed in skeletal muscle, heart, lung and brain. Sarcolemma and neuromuscular junction in skeletal muscle. Isoform 2 is restricted to the neuromuscular junction. Isoforms 5 and 6 are only expressed in muscle.

It localises to the cytoplasm. Its subcellular location is the synapse. The protein resides in the cell membrane. Involved in synapse maturation and required for normal muscle function. The protein is Dystrobrevin alpha (Dtna) of Mus musculus (Mouse).